A 380-amino-acid chain; its full sequence is Erythronate-4-phosphate dehydrogenase (380 aa).

Residues serine 45 and threonine 66 each coordinate substrate. Residues aspartate 146, threonine 174, 205 to 207, and aspartate 231 contribute to the NAD(+) site; that span reads ASR. Residue arginine 207 is part of the active site. Residue glutamate 236 is part of the active site. The active-site Proton donor is histidine 253. Glycine 256 lines the NAD(+) pocket. Tyrosine 257 contributes to the substrate binding site.

Belongs to the D-isomer specific 2-hydroxyacid dehydrogenase family. PdxB subfamily. As to quaternary structure, homodimer.

It is found in the cytoplasm. It catalyses the reaction 4-phospho-D-erythronate + NAD(+) = (R)-3-hydroxy-2-oxo-4-phosphooxybutanoate + NADH + H(+). It participates in cofactor biosynthesis; pyridoxine 5'-phosphate biosynthesis; pyridoxine 5'-phosphate from D-erythrose 4-phosphate: step 2/5. Catalyzes the oxidation of erythronate-4-phosphate to 3-hydroxy-2-oxo-4-phosphonooxybutanoate. The polypeptide is Erythronate-4-phosphate dehydrogenase (Pseudomonas putida (strain ATCC 700007 / DSM 6899 / JCM 31910 / BCRC 17059 / LMG 24140 / F1)).